Consider the following 423-residue polypeptide: Sulfate adenylyltransferase (423 aa).

Sulfate is bound by residues glutamine 207 and arginine 209. Residues 207–210 and 301–304 each bind ATP; these read QLRN and GRDH. Residues arginine 209 and asparagine 210 contribute to the active site. Alanine 305 is a binding site for sulfate.

Belongs to the sulfate adenylyltransferase family.

The protein resides in the mitosome. It carries out the reaction sulfate + ATP + H(+) = adenosine 5'-phosphosulfate + diphosphate. It functions in the pathway sulfur metabolism; hydrogen sulfide biosynthesis; sulfite from sulfate: step 1/3. Functionally, catalyzes the first intracellular reaction of sulfate assimilation, forming adenosine-5'-phosphosulfate (APS) from inorganic sulfate and ATP. The polypeptide is Sulfate adenylyltransferase (Entamoeba histolytica (strain ATCC 30459 / HM-1:IMSS / ABRM)).